The chain runs to 175 residues: Ribosome maturation factor RimM (175 aa).

The region spanning 96–175 (EGDYYWHDLI…TITVDWDAGF (80 aa)) is the PRC barrel domain.

It belongs to the RimM family. In terms of assembly, binds ribosomal protein uS19.

It is found in the cytoplasm. Functionally, an accessory protein needed during the final step in the assembly of 30S ribosomal subunit, possibly for assembly of the head region. Essential for efficient processing of 16S rRNA. May be needed both before and after RbfA during the maturation of 16S rRNA. It has affinity for free ribosomal 30S subunits but not for 70S ribosomes. In Actinobacillus pleuropneumoniae serotype 5b (strain L20), this protein is Ribosome maturation factor RimM.